The primary structure comprises 523 residues: Polypyrimidine tract-binding protein 3 (523 aa).

A disordered region spans residues 1-25; that stretch reads MNSSTSAGVYANGNDNKKFKGDRPP. RRM domains are found at residues 30–114, 153–229, and 329–403; these read RVLH…NLPN, LRII…FSKL, and SVLL…LSKH. Lys-36 participates in a covalent cross-link: Glycyl lysine isopeptide (Lys-Gly) (interchain with G-Cter in SUMO2). Tyr-98 carries the post-translational modification Phosphotyrosine. At Thr-109 the chain carries Phosphothreonine. Residue Lys-187 forms a Glycyl lysine isopeptide (Lys-Gly) (interchain with G-Cter in SUMO2) linkage. The residue at position 394 (Lys-394) is an N6-acetyllysine. The disordered stretch occupies residues 406-426; the sequence is VQLPREGQEDQGLTKDFSNSP. Ser-425 carries the post-translational modification Phosphoserine. The region spanning 446–521 is the RRM 4 domain; sequence ATLHLSNIPP…HHLRVSFSKS (76 aa).

Interacts with THBS4 (via the acidic amphipathic C-terminus).

In terms of biological role, RNA-binding protein that mediates pre-mRNA alternative splicing regulation. Plays a role in the regulation of cell proliferation, differentiation and migration. Positive regulator of EPO-dependent erythropoiesis. Participates in cell differentiation regulation by repressing tissue-specific exons. Promotes Fas exon 6 skipping. Binds RNA, preferentially to both poly(G) and poly(U). This Mus musculus (Mouse) protein is Polypyrimidine tract-binding protein 3 (Ptbp3).